A 188-amino-acid polypeptide reads, in one-letter code: Elongation factor P (188 aa).

An N6-(3,6-diaminohexanoyl)-5-hydroxylysine modification is found at K34.

The protein belongs to the elongation factor P family. May be beta-lysylated on the epsilon-amino group of Lys-34 by the combined action of EpmA and EpmB, and then hydroxylated on the C5 position of the same residue by EpmC (if this protein is present). Lysylation is critical for the stimulatory effect of EF-P on peptide-bond formation. The lysylation moiety may extend toward the peptidyltransferase center and stabilize the terminal 3-CCA end of the tRNA. Hydroxylation of the C5 position on Lys-34 may allow additional potential stabilizing hydrogen-bond interactions with the P-tRNA.

The protein resides in the cytoplasm. It functions in the pathway protein biosynthesis; polypeptide chain elongation. Involved in peptide bond synthesis. Alleviates ribosome stalling that occurs when 3 or more consecutive Pro residues or the sequence PPG is present in a protein, possibly by augmenting the peptidyl transferase activity of the ribosome. Modification of Lys-34 is required for alleviation. This is Elongation factor P from Pseudoalteromonas translucida (strain TAC 125).